Reading from the N-terminus, the 318-residue chain is Ankyrin repeat domain-containing protein 1 (318 aa).

Residues 37–77 (ALEKQEDLKTTSKSLIELEEEKQIKEKQLKSELLKKKLEER) adopt a coiled-coil conformation. ANK repeat units lie at residues 118 to 147 (VDQT…DPNT), 151 to 180 (YKRT…NIEF), 184 to 213 (LEST…AINA), 217 to 246 (LLST…DLHA), 250 to 279 (EGDT…DLNI), and 283 to 314 (AGKT…KNSH).

The protein localises to the nucleus. Its function is as follows. May act as a nuclear transcription factor that negatively regulates the expression of cardiac genes. This Xenopus tropicalis (Western clawed frog) protein is Ankyrin repeat domain-containing protein 1 (ankrd1).